A 442-amino-acid chain; its full sequence is Proline--tRNA ligase (442 aa).

This sequence belongs to the class-II aminoacyl-tRNA synthetase family. ProS type 2 subfamily. In terms of assembly, homodimer.

The protein localises to the cytoplasm. The catalysed reaction is tRNA(Pro) + L-proline + ATP = L-prolyl-tRNA(Pro) + AMP + diphosphate. Functionally, catalyzes the attachment of proline to tRNA(Pro) in a two-step reaction: proline is first activated by ATP to form Pro-AMP and then transferred to the acceptor end of tRNA(Pro). The sequence is that of Proline--tRNA ligase from Brucella canis (strain ATCC 23365 / NCTC 10854 / RM-666).